A 203-amino-acid chain; its full sequence is Holliday junction branch migration complex subunit RuvA (203 aa).

Residues M1–L63 are domain I. The domain II stretch occupies residues T64–K142. Residues E143–N149 are flexible linker. A domain III region spans residues I150 to F203.

The protein belongs to the RuvA family. In terms of assembly, homotetramer. Forms an RuvA(8)-RuvB(12)-Holliday junction (HJ) complex. HJ DNA is sandwiched between 2 RuvA tetramers; dsDNA enters through RuvA and exits via RuvB. An RuvB hexamer assembles on each DNA strand where it exits the tetramer. Each RuvB hexamer is contacted by two RuvA subunits (via domain III) on 2 adjacent RuvB subunits; this complex drives branch migration. In the full resolvosome a probable DNA-RuvA(4)-RuvB(12)-RuvC(2) complex forms which resolves the HJ.

The protein localises to the cytoplasm. Functionally, the RuvA-RuvB-RuvC complex processes Holliday junction (HJ) DNA during genetic recombination and DNA repair, while the RuvA-RuvB complex plays an important role in the rescue of blocked DNA replication forks via replication fork reversal (RFR). RuvA specifically binds to HJ cruciform DNA, conferring on it an open structure. The RuvB hexamer acts as an ATP-dependent pump, pulling dsDNA into and through the RuvAB complex. HJ branch migration allows RuvC to scan DNA until it finds its consensus sequence, where it cleaves and resolves the cruciform DNA. The polypeptide is Holliday junction branch migration complex subunit RuvA (Rickettsia peacockii (strain Rustic)).